The sequence spans 651 residues: Ion-translocating oxidoreductase complex subunit C (651 aa).

4Fe-4S ferredoxin-type domains follow at residues 368 to 398 and 408 to 437; these read EYAE…QQLY and KSEE…IQYF. Cysteine 378, cysteine 381, cysteine 384, cysteine 388, cysteine 417, cysteine 420, cysteine 423, and cysteine 427 together coordinate [4Fe-4S] cluster. Basic and acidic residues-rich tracts occupy residues 465 to 477 and 485 to 513; these read QARM…ERKA and ARRE…KANE. 2 disordered regions span residues 465-565 and 583-624; these read QARM…QPTD and LAQA…DPKK. Composition is skewed to polar residues over residues 554–564 and 587–600; these read VENQEQQTQPT and NSTS…QTAE. The segment covering 602-614 has biased composition (basic and acidic residues); that stretch reads EVEKTKSAVEKTQ.

It belongs to the 4Fe4S bacterial-type ferredoxin family. RnfC subfamily. The complex is composed of six subunits: RnfA, RnfB, RnfC, RnfD, RnfE and RnfG. [4Fe-4S] cluster is required as a cofactor.

The protein resides in the cell inner membrane. Functionally, part of a membrane-bound complex that couples electron transfer with translocation of ions across the membrane. In Haemophilus influenzae (strain PittEE), this protein is Ion-translocating oxidoreductase complex subunit C.